The following is a 130-amino-acid chain: Small ribosomal subunit protein uS9 (130 aa).

The protein belongs to the universal ribosomal protein uS9 family.

This is Small ribosomal subunit protein uS9 from Onion yellows phytoplasma (strain OY-M).